The following is a 192-amino-acid chain: Mitochondrial import inner membrane translocase subunit Tim22 (192 aa).

2 disulfide bridges follow: cysteine 67–cysteine 139 and cysteine 158–cysteine 177. 3 helical membrane-spanning segments follow: residues 72–92, 123–141, and 168–188; these read VLACVGGFVLGGAFGVFTAGI, YAKNFAIVGAMFSCTECLV, and AGVKAGAIGCGGFAAFSAAID.

It belongs to the Tim17/Tim22/Tim23 family. As to quaternary structure, component of the TIM22 complex, whose core is composed of TIMM22, associated with peripheral protein FXC1/TIMM10B and the 70 kDa heterohexamer. In most cases, the 70 kDa complex is composed of TIMM9 and TIMM10 (TIMM10A or TIMM10B). A small fraction of the 70 kDa complex is composed of TIMM8 (TIMM8A/DDP1 or TIMM8B/DDP2) and TIMM13. The TIM22 complex also contains AGK and TIMM29. Interacts directly with TIMM9, TIMM10A and FXC1/TIMM10B. Interacts (when oxidized) with TIMM29; interaction is direct. Post-translationally, disulfide bonds promote efficient assembly of the TIM22 complex.

It is found in the mitochondrion inner membrane. Its function is as follows. Essential core component of the TIM22 complex, a complex that mediates the import and insertion of multi-pass transmembrane proteins into the mitochondrial inner membrane. In the TIM22 complex, it constitutes the voltage-activated and signal-gated channel. Forms a twin-pore translocase that uses the membrane potential as external driving force in 2 voltage-dependent steps. The protein is Mitochondrial import inner membrane translocase subunit Tim22 (Timm22) of Rattus norvegicus (Rat).